Reading from the N-terminus, the 210-residue chain is PEP-dependent dihydroxyacetone kinase, ADP-binding subunit DhaL (210 aa).

Residues 6 to 206 (TQIVNWLTRC…VMFMMQMLAL (201 aa)) enclose the DhaL domain. The Mg(2+) site is built by Asp30, Asp35, and Asp37. ADP contacts are provided by residues 38–41 (HGLN), 79–80 (AS), Gly121, Met130, Arg178, and 191–193 (DPG).

As to quaternary structure, homodimer. The dihydroxyacetone kinase complex is composed of a homodimer of DhaM, a homodimer of DhaK and the subunit DhaL. DhaL also forms a complex with DhaR. The cofactor is Mg(2+).

The protein localises to the cytoplasm. The enzyme catalyses dihydroxyacetone + phosphoenolpyruvate = dihydroxyacetone phosphate + pyruvate. The protein operates within polyol metabolism; glycerol degradation. ADP-binding subunit of the dihydroxyacetone kinase, which is responsible for the phosphoenolpyruvate (PEP)-dependent phosphorylation of dihydroxyacetone. DhaL-ADP is converted to DhaL-ATP via a phosphoryl group transfer from DhaM and transmits it to dihydroxyacetone bound to DhaK. DhaL also acts as coactivator of the transcription activator DhaR by binding to the sensor domain of DhaR. In the presence of dihydroxyacetone, DhaL-ADP displaces DhaK and stimulates DhaR activity. In the absence of dihydroxyacetone, DhaL-ADP is converted by the PTS to DhaL-ATP, which does not bind to DhaR. The protein is PEP-dependent dihydroxyacetone kinase, ADP-binding subunit DhaL of Escherichia coli (strain K12).